Reading from the N-terminus, the 217-residue chain is ATP-dependent Clp protease proteolytic subunit (217 aa).

S119 functions as the Nucleophile in the catalytic mechanism. The active site involves H144.

The protein belongs to the peptidase S14 family. In terms of assembly, fourteen ClpP subunits assemble into 2 heptameric rings which stack back to back to give a disk-like structure with a central cavity, resembling the structure of eukaryotic proteasomes.

The protein resides in the cytoplasm. The catalysed reaction is Hydrolysis of proteins to small peptides in the presence of ATP and magnesium. alpha-casein is the usual test substrate. In the absence of ATP, only oligopeptides shorter than five residues are hydrolyzed (such as succinyl-Leu-Tyr-|-NHMec, and Leu-Tyr-Leu-|-Tyr-Trp, in which cleavage of the -Tyr-|-Leu- and -Tyr-|-Trp bonds also occurs).. Cleaves peptides in various proteins in a process that requires ATP hydrolysis. Has a chymotrypsin-like activity. Plays a major role in the degradation of misfolded proteins. This Bordetella petrii (strain ATCC BAA-461 / DSM 12804 / CCUG 43448) protein is ATP-dependent Clp protease proteolytic subunit.